The sequence spans 184 residues: Oligoribonuclease (184 aa).

The region spanning 8-171 (LIWIDLEMTG…DDIRESIAEL (164 aa)) is the Exonuclease domain. Tyrosine 129 is a catalytic residue.

This sequence belongs to the oligoribonuclease family.

The protein localises to the cytoplasm. In terms of biological role, 3'-to-5' exoribonuclease specific for small oligoribonucleotides. This is Oligoribonuclease from Pasteurella multocida (strain Pm70).